The following is a 162-amino-acid chain: Endoribonuclease YbeY (162 aa).

The Zn(2+) site is built by H117, H121, and H127.

The protein belongs to the endoribonuclease YbeY family. The cofactor is Zn(2+).

Its subcellular location is the cytoplasm. Functionally, single strand-specific metallo-endoribonuclease involved in late-stage 70S ribosome quality control and in maturation of the 3' terminus of the 16S rRNA. The sequence is that of Endoribonuclease YbeY from Francisella tularensis subsp. mediasiatica (strain FSC147).